The sequence spans 536 residues: UDP-glucuronosyltransferase 2A2 (536 aa).

Over 1–15 (MVSIRDFTMPKKFVQ) the chain is Cytoplasmic. Residues 16-36 (MLVFNLTLTEVVLSGNVLIWP) form a helical membrane-spanning segment. The Lumenal portion of the chain corresponds to 37 to 500 (TDGSHWLNIK…TWFQYHSLDV (464 aa)). Residues N58, N322, and N356 are each glycosylated (N-linked (GlcNAc...) asparagine). A helical transmembrane segment spans residues 501–521 (IGFLLVCVTTAIFLVIQCCLF). Over 522 to 536 (SCQKFGKIGKKKKRE) the chain is Cytoplasmic.

This sequence belongs to the UDP-glycosyltransferase family. Mainly expressed in the nasal mucosa.

It localises to the endoplasmic reticulum membrane. It catalyses the reaction glucuronate acceptor + UDP-alpha-D-glucuronate = acceptor beta-D-glucuronoside + UDP + H(+). It carries out the reaction 17alpha-estradiol + UDP-alpha-D-glucuronate = 17alpha-estradiol 3-O-(beta-D-glucuronate) + UDP + H(+). The enzyme catalyses 17beta-estradiol + UDP-alpha-D-glucuronate = 17beta-estradiol 3-O-(beta-D-glucuronate) + UDP + H(+). The catalysed reaction is chenodeoxycholate + UDP-alpha-D-glucuronate = chenodeoxycholoyl-24-O-(beta-D-glucuronate) + UDP. It catalyses the reaction lithocholate + UDP-alpha-D-glucuronate = lithocholoyl-24-O-(beta-D-glucuronate) + UDP. It carries out the reaction deoxycholate + UDP-alpha-D-glucuronate = deoxycholoyl-24-O-(beta-D-glucuronate) + UDP. The enzyme catalyses hyocholate + UDP-alpha-D-glucuronate = hyocholoyl-24-O-(beta-D-glucuronate) + UDP. The catalysed reaction is hyodeoxycholate + UDP-alpha-D-glucuronate = hyodeoxycholate 6-O-(beta-D-glucuronate) + UDP + H(+). Its function is as follows. UDP-glucuronosyltransferase (UGT) that catalyzes phase II biotransformation reactions in which lipophilic substrates are conjugated with glucuronic acid to increase the metabolite's water solubility, thereby facilitating excretion into either the urine or bile. Essential for the elimination and detoxification of drugs, xenobiotics and endogenous compounds. Catalyzes the glucuronidation of endogenous estrogen hormone estradiol. Contributes to bile acid (BA) detoxification by catalyzing the glucuronidation of BA substrates, which are natural detergents for dietary lipids absorption. Shows a potential role in detoxification of toxic waste compounds in the amniotic fluid before birth, and air-born chemical after birth. The sequence is that of UDP-glucuronosyltransferase 2A2 from Homo sapiens (Human).